The sequence spans 520 residues: Cytochrome P450 84A1 (520 aa).

Residue M1 is modified to N-acetylmethionine. The helical transmembrane segment at 12 to 32 (LSDPTTSLVIVVSLFIFISFI) threads the bilayer. Residue C458 participates in heme binding.

Belongs to the cytochrome P450 family. Heme serves as cofactor.

The protein localises to the membrane. It functions in the pathway aromatic compound metabolism; phenylpropanoid biosynthesis. This Arabidopsis thaliana (Mouse-ear cress) protein is Cytochrome P450 84A1 (CYP84A1).